The sequence spans 105 residues: Ig lambda chain C region (105 aa).

Residues 2–100 (PKAAPTVNLF…EGTIVEKTVT (99 aa)) enclose the Ig-like domain. An intrachain disulfide couples cysteine 27 to cysteine 86.

The chain is Ig lambda chain C region from Sus scrofa (Pig).